The following is a 591-amino-acid chain: General transcription and DNA repair factor IIH subunit TFB1-1 (591 aa).

2 BSD domains span residues 112–166 and 191–243; these read STSS…GKDS and RTNR…YLYS.

It belongs to the TFB1 family. As to quaternary structure, component of the 7-subunit TFIIH core complex composed of XPB, XPD, TFB1/GTF2H1, GTF2H2/P44, TFB4/GTF2H3, TFB2/GTF2H4 and TFB5/GTF2H5, which is active in NER. The core complex associates with the 3-subunit CDK-activating kinase (CAK) module composed of CYCH1/cyclin H1, CDKD and MAT1/At4g30820 to form the 10-subunit holoenzyme (holo-TFIIH) active in transcription.

The protein resides in the nucleus. Functionally, component of the general transcription and DNA repair factor IIH (TFIIH) core complex, which is involved in general and transcription-coupled nucleotide excision repair (NER) of damaged DNA and, when complexed to CAK, in RNA transcription by RNA polymerase II. In NER, TFIIH acts by opening DNA around the lesion to allow the excision of the damaged oligonucleotide and its replacement by a new DNA fragment. In transcription, TFIIH has an essential role in transcription initiation. When the pre-initiation complex (PIC) has been established, TFIIH is required for promoter opening and promoter escape. Phosphorylation of the C-terminal tail (CTD) of the largest subunit of RNA polymerase II by the kinase module CAK controls the initiation of transcription. The protein is General transcription and DNA repair factor IIH subunit TFB1-1 of Arabidopsis thaliana (Mouse-ear cress).